A 41-amino-acid chain; its full sequence is Large ribosomal subunit protein bL36 (41 aa).

It belongs to the bacterial ribosomal protein bL36 family.

This is Large ribosomal subunit protein bL36 from Rhizobium rhizogenes (strain K84 / ATCC BAA-868) (Agrobacterium radiobacter).